A 59-amino-acid polypeptide reads, in one-letter code: UPF0181 protein YoaH (59 aa).

The protein belongs to the UPF0181 family.

The polypeptide is UPF0181 protein YoaH (Escherichia coli O127:H6 (strain E2348/69 / EPEC)).